Reading from the N-terminus, the 409-residue chain is Evolutionarily conserved signaling intermediate in Toll pathway, mitochondrial (409 aa).

The transit peptide at 1–26 (MLRRAQCLLRLHGNGGHSLVSRFRNY) directs the protein to the mitochondrion. Disordered regions lie at residues 27–53 (ATDE…NLPA) and 383–409 (EEIE…SRQK). Positions 400-409 (QDEHISSRQK) are enriched in basic and acidic residues.

This sequence belongs to the ECSIT family. In terms of assembly, interacts with Traf6. Associates with mitochondrial complex I assembly intermediates during its biogenesis.

The protein localises to the cytoplasm. The protein resides in the nucleus. It localises to the mitochondrion. As part of the MCIA complex, involved in the assembly of the mitochondrial complex I. Involved in the innate immune response; promotes the production of antibacterial peptides. This chain is Evolutionarily conserved signaling intermediate in Toll pathway, mitochondrial, found in Drosophila melanogaster (Fruit fly).